A 92-amino-acid chain; its full sequence is YcgL domain-containing protein Shewmr7_2249 (92 aa).

Residues 1–85 (MLCAVYKSSR…PQVNLLAEHR (85 aa)) enclose the YcgL domain.

The polypeptide is YcgL domain-containing protein Shewmr7_2249 (Shewanella sp. (strain MR-7)).